Reading from the N-terminus, the 123-residue chain is Large ribosomal subunit protein uL18 (123 aa).

The protein belongs to the universal ribosomal protein uL18 family. Part of the 50S ribosomal subunit; part of the 5S rRNA/L5/L18/L25 subcomplex. Contacts the 5S and 23S rRNAs.

Functionally, this is one of the proteins that bind and probably mediate the attachment of the 5S RNA into the large ribosomal subunit, where it forms part of the central protuberance. This is Large ribosomal subunit protein uL18 from Chlamydia abortus (strain DSM 27085 / S26/3) (Chlamydophila abortus).